Reading from the N-terminus, the 272-residue chain is Cytochrome c1 (272 aa).

The first 24 residues, 1–24, serve as a signal peptide directing secretion; it reads MTTIVKRALVAAGMVLAIGGAAQA. Cysteine 61, cysteine 64, histidine 65, and methionine 200 together coordinate heme c. A helical transmembrane segment spans residues 244–261; it reads LGLKVLLFLGVLTAMLLA.

As to quaternary structure, the main subunits of complex b-c1 are: cytochrome b, cytochrome c1 and the Rieske protein. In terms of processing, binds 1 heme c group covalently per subunit.

Its subcellular location is the cell membrane. Functionally, component of the ubiquinol-cytochrome c reductase complex (complex III or cytochrome b-c1 complex), which is a respiratory chain that generates an electrochemical potential coupled to ATP synthesis. The chain is Cytochrome c1 (petC) from Rhodospirillum rubrum.